A 451-amino-acid chain; its full sequence is Tubulin alpha chain (451 aa).

Residue Q11 coordinates GTP. Residue K40 is modified to N6-acetyllysine. The GTP site is built by E71, G144, T145, T179, N206, and N228. E71 is a binding site for Mg(2+). Residue E254 is part of the active site. The disordered stretch occupies residues 432-451; sequence YEEVGAESAEGDDEDEGEDY.

It belongs to the tubulin family. In terms of assembly, dimer of alpha and beta chains. A typical microtubule is a hollow water-filled tube with an outer diameter of 25 nm and an inner diameter of 15 nM. Alpha-beta heterodimers associate head-to-tail to form protofilaments running lengthwise along the microtubule wall with the beta-tubulin subunit facing the microtubule plus end conferring a structural polarity. Microtubules usually have 13 protofilaments but different protofilament numbers can be found in some organisms and specialized cells. Requires Mg(2+) as cofactor. In terms of processing, undergoes a tyrosination/detyrosination cycle, the cyclic removal and re-addition of a C-terminal tyrosine residue by the enzymes tubulin tyrosine carboxypeptidase (TTCP) and tubulin tyrosine ligase (TTL), respectively. Acetylation of alpha chains at Lys-40 stabilizes microtubules and affects affinity and processivity of microtubule motors. This modification has a role in multiple cellular functions, ranging from cell motility, cell cycle progression or cell differentiation to intracellular trafficking and signaling.

Its subcellular location is the cytoplasm. The protein localises to the cytoskeleton. The enzyme catalyses GTP + H2O = GDP + phosphate + H(+). Tubulin is the major constituent of microtubules, a cylinder consisting of laterally associated linear protofilaments composed of alpha- and beta-tubulin heterodimers. Microtubules grow by the addition of GTP-tubulin dimers to the microtubule end, where a stabilizing cap forms. Below the cap, tubulin dimers are in GDP-bound state, owing to GTPase activity of alpha-tubulin. This chain is Tubulin alpha chain (TBA), found in Daucus carota (Wild carrot).